We begin with the raw amino-acid sequence, 182 residues long: ATP-dependent protease subunit HslV (182 aa).

T7 is a catalytic residue. The Na(+) site is built by G162, C165, and T168.

This sequence belongs to the peptidase T1B family. HslV subfamily. As to quaternary structure, a double ring-shaped homohexamer of HslV is capped on each side by a ring-shaped HslU homohexamer. The assembly of the HslU/HslV complex is dependent on binding of ATP.

Its subcellular location is the cytoplasm. It catalyses the reaction ATP-dependent cleavage of peptide bonds with broad specificity.. With respect to regulation, allosterically activated by HslU binding. Functionally, protease subunit of a proteasome-like degradation complex believed to be a general protein degrading machinery. This chain is ATP-dependent protease subunit HslV, found in Legionella pneumophila subsp. pneumophila (strain Philadelphia 1 / ATCC 33152 / DSM 7513).